The chain runs to 162 residues: Protein LTO1 (162 aa).

Residues 17 to 53 (GFLEGQNENIKQSFLEGKQYGLQVGFQRFTLLGQMEG) are deca-GX3 motif; required for interaction with YAE1 and the CIA complex.

It belongs to the LTO1 family. As to quaternary structure, forms a complex with YAE1; the complex bridges the interaction between the CIA complex and RLI1. Associates with the CIA complex (via its C-terminal tryptophan).

It is found in the nucleus. Functionally, essential for life in oxygen, but nonessential under anaerobic conditions. Required for biogenesis of the large ribosomal subunit and initiation of translation in oxygen. The complex LTO1:YAE1 functions as a target specific adapter that recruits apo-RLI1 to the cytosolic iron-sulfur protein assembly (CIA) complex machinery. The protein is Protein LTO1 of Saccharomyces cerevisiae (strain ATCC 204508 / S288c) (Baker's yeast).